Here is a 547-residue protein sequence, read N- to C-terminus: Putative nitric oxide synthase (547 aa).

Over residues 24–40 (QLAPNPSSFSPTRAAST) the composition is skewed to low complexity. 2 disordered regions span residues 24–57 (QLAP…SRGD) and 72–91 (VLAP…RKAL). The span at 81–91 (RRRRREKRKAL) shows a compositional bias: basic residues. Residues 167-343 (ADQLRDKLSY…LYDTPGVHLH (177 aa)) enclose the CP-type G domain.

It belongs to the TRAFAC class YlqF/YawG GTPase family. NOA1 subfamily.

It catalyses the reaction 2 L-arginine + 3 NADPH + 4 O2 + H(+) = 2 L-citrulline + 2 nitric oxide + 3 NADP(+) + 4 H2O. Its function is as follows. Produces nitric oxide (NO) which is a messenger molecule involved in hormonal signaling and defense responses in plant. In Oryza sativa subsp. japonica (Rice), this protein is Putative nitric oxide synthase.